The sequence spans 114 residues: uncharacterized protein (114 aa).

The segment at 90 to 114 is disordered; it reads VESSQKRKPEESTIGMDAPKKMKRG.

This is an uncharacterized protein from Caenorhabditis elegans.